The chain runs to 184 residues: Small ribosomal subunit protein uS4 (184 aa).

One can recognise an S4 RNA-binding domain in the interval 108–172; the sequence is RRLQTQVHRL…SPMTKESHPE (65 aa). The interval 163–184 is disordered; that stretch reads SPMTKESHPERPAQIAASVVEE.

Belongs to the universal ribosomal protein uS4 family. As to quaternary structure, part of the 30S ribosomal subunit. Contacts protein S5. The interaction surface between S4 and S5 is involved in control of translational fidelity.

One of the primary rRNA binding proteins, it binds directly to 16S rRNA where it nucleates assembly of the body of the 30S subunit. In terms of biological role, with S5 and S12 plays an important role in translational accuracy. This Methanococcoides burtonii (strain DSM 6242 / NBRC 107633 / OCM 468 / ACE-M) protein is Small ribosomal subunit protein uS4.